Consider the following 138-residue polypeptide: MRTLWIMAVLLVGVEGHLLQFRKMIKKMTGKEPIVSYAFYGCYCGKGGRGKPKDATDRCCFVHDCCYEKVTGCDPKWDYYTYSLENGDIVCGGDNPCTKVVCECDKAAAICFRDNLKTYKKRYMTFPDIFCTDPTEKC.

The N-terminal stretch at 1 to 16 (MRTLWIMAVLLVGVEG) is a signal peptide. 7 disulfide bridges follow: Cys-42-Cys-131, Cys-44-Cys-60, Cys-59-Cys-111, Cys-65-Cys-138, Cys-66-Cys-104, Cys-73-Cys-97, and Cys-91-Cys-102. Residues Tyr-43, Gly-45, and Gly-47 each contribute to the Ca(2+) site. His-63 is a catalytic residue. Asp-64 lines the Ca(2+) pocket. The active site involves Asp-105.

It belongs to the phospholipase A2 family. Group II subfamily. D49 sub-subfamily. It depends on Ca(2+) as a cofactor. Expressed by the venom gland.

The protein resides in the secreted. It catalyses the reaction a 1,2-diacyl-sn-glycero-3-phosphocholine + H2O = a 1-acyl-sn-glycero-3-phosphocholine + a fatty acid + H(+). Snake venom phospholipase A2 (PLA2) that can cleave arachidonate at the sn-2 position from phospholipides in the micellar state or in bilayer membranes. PLA2 catalyzes the calcium-dependent hydrolysis of the 2-acyl groups in 3-sn-phosphoglycerides. This is Basic phospholipase A2 PL-Y from Protobothrops flavoviridis (Habu).